The primary structure comprises 525 residues: Probable lipid II flippase MurJ (525 aa).

14 consecutive transmembrane segments (helical) span residues 10-30, 32-52, 100-120, 140-160, 171-191, 203-223, 247-267, 285-305, 330-350, 368-388, 402-422, 423-443, 455-475, and 495-515; these read LLKSGIIVSAMTLISRVLGLV, DVVVANLMGAGASADVFFFAN, VLVTIVTLIGVLGSGAVTALF, LASLLLKITFPYLWFITFVAL, FAVSSFTPVFLNVMMILCAWY, LAIGVFLGGLVQFLFQLPFLI, MIPALFGVSVSQINLLFDSFV, LLEFPLGLFGIAIATVILPAL, FLGIPAMLGLMVLAKPMLMVL, LLAYSSGLLSFMLIKVLAPGY, IIAMVSNIVLNAIFAWFYGYV, GLAVATSMSAFLNMALLYRGL, TVWFVARLAMAGAVMTGALLW, and LTGLIGLGVASYLAILLLLGV.

Belongs to the MurJ/MviN family.

Its subcellular location is the cell inner membrane. It functions in the pathway cell wall biogenesis; peptidoglycan biosynthesis. Its function is as follows. Involved in peptidoglycan biosynthesis. Transports lipid-linked peptidoglycan precursors from the inner to the outer leaflet of the cytoplasmic membrane. In Vibrio cholerae serotype O1 (strain ATCC 39315 / El Tor Inaba N16961), this protein is Probable lipid II flippase MurJ.